The chain runs to 65 residues: Large ribosomal subunit protein bL31 (65 aa).

Zn(2+) is bound by residues Cys16, Cys18, Cys36, and Cys39.

This sequence belongs to the bacterial ribosomal protein bL31 family. Type A subfamily. In terms of assembly, part of the 50S ribosomal subunit. Zn(2+) is required as a cofactor.

Its function is as follows. Binds the 23S rRNA. This Geotalea uraniireducens (strain Rf4) (Geobacter uraniireducens) protein is Large ribosomal subunit protein bL31.